Reading from the N-terminus, the 444-residue chain is Deoxyguanosinetriphosphate triphosphohydrolase-like protein (444 aa).

Residues 1 to 28 (MTDAVWNERRLGEDKQRRNDHRSPYQRD) are disordered. The HD domain occupies 59–250 (RLTHSLEVSQ…MELADDIAYA (192 aa)).

It belongs to the dGTPase family. Type 2 subfamily.

The polypeptide is Deoxyguanosinetriphosphate triphosphohydrolase-like protein (Shewanella pealeana (strain ATCC 700345 / ANG-SQ1)).